The sequence spans 442 residues: Ribulose bisphosphate carboxylase/oxygenase activase 1, chloroplastic (442 aa).

A chloroplast-targeting transit peptide spans 1-58 (MATSVSTIGAVNKTPLSLNNSVAGTSVPSTAFFGKTLKKVYGKGVSSPKVTNKSLRIV). 169–176 (GGKGQGKS) is an ATP binding site.

It belongs to the RuBisCO activase family.

It is found in the plastid. The protein localises to the chloroplast stroma. Activation of RuBisCO (ribulose-1,5-bisphosphate carboxylase/oxygenase; EC 4.1.1.39) involves the ATP-dependent carboxylation of the epsilon-amino group of lysine leading to a carbamate structure. This is Ribulose bisphosphate carboxylase/oxygenase activase 1, chloroplastic from Nicotiana tabacum (Common tobacco).